A 431-amino-acid polypeptide reads, in one-letter code: Serine hydroxymethyltransferase (431 aa).

(6S)-5,6,7,8-tetrahydrofolate-binding positions include Leu121 and 125–127 (GHL). N6-(pyridoxal phosphate)lysine is present on Lys230. 369–371 (SPF) is a binding site for (6S)-5,6,7,8-tetrahydrofolate.

This sequence belongs to the SHMT family. In terms of assembly, homodimer. It depends on pyridoxal 5'-phosphate as a cofactor.

It localises to the cytoplasm. The catalysed reaction is (6R)-5,10-methylene-5,6,7,8-tetrahydrofolate + glycine + H2O = (6S)-5,6,7,8-tetrahydrofolate + L-serine. The protein operates within one-carbon metabolism; tetrahydrofolate interconversion. It participates in amino-acid biosynthesis; glycine biosynthesis; glycine from L-serine: step 1/1. In terms of biological role, catalyzes the reversible interconversion of serine and glycine with tetrahydrofolate (THF) serving as the one-carbon carrier. This reaction serves as the major source of one-carbon groups required for the biosynthesis of purines, thymidylate, methionine, and other important biomolecules. Also exhibits THF-independent aldolase activity toward beta-hydroxyamino acids, producing glycine and aldehydes, via a retro-aldol mechanism. The protein is Serine hydroxymethyltransferase of Cytophaga hutchinsonii (strain ATCC 33406 / DSM 1761 / CIP 103989 / NBRC 15051 / NCIMB 9469 / D465).